The primary structure comprises 167 residues: Translationally-controlled tumor protein homolog (167 aa).

A TCTP domain is found at 1-167 (MIIFTDVISG…WKHGVSEDKI (167 aa)).

The protein belongs to the TCTP family.

The protein localises to the cytoplasm. The protein resides in the cytoskeleton. Involved in protein synthesis. Involved in microtubule stabilization. This chain is Translationally-controlled tumor protein homolog, found in Debaryomyces hansenii (strain ATCC 36239 / CBS 767 / BCRC 21394 / JCM 1990 / NBRC 0083 / IGC 2968) (Yeast).